Here is a 387-residue protein sequence, read N- to C-terminus: Protein phosphatase 2C 50 (387 aa).

The region spanning 60–377 (VWGCASTRGR…DNITVIVVDL (318 aa)) is the PPM-type phosphatase domain. Residues Asp118 and Gly119 each coordinate Mn(2+). Positions 264-268 (VSGIL) match the Modulates binding affinity to PYR/PYL/RCAR abscisic acid intracellular receptors motif. Residues Asp306 and Asp368 each contribute to the Mn(2+) site.

This sequence belongs to the PP2C family. Interacts with PYL3, PYL5, PYL9 and PYL10. Binding to PYL3, PYL5, PYL9 and PYL10 is dependent on the presence of abscisic acid (ABA). Interacts with SAPK10. Mg(2+) serves as cofactor. Mn(2+) is required as a cofactor.

It carries out the reaction O-phospho-L-seryl-[protein] + H2O = L-seryl-[protein] + phosphate. It catalyses the reaction O-phospho-L-threonyl-[protein] + H2O = L-threonyl-[protein] + phosphate. Protein phosphatase involved in abscisic acid (ABA) signaling. Together with PYL3 and SAPK10, may form an ABA signaling module involved in stress response. The polypeptide is Protein phosphatase 2C 50 (Oryza sativa subsp. japonica (Rice)).